We begin with the raw amino-acid sequence, 357 residues long: U3 small nucleolar ribonucleoprotein protein LCP5 (357 aa).

Residue S2 is modified to N-acetylserine. Disordered stretches follow at residues S146 to P211 and N301 to L357. Acidic residues predominate over residues D155–E166. Residues P171 to S183 show a composition bias toward polar residues. 2 stretches are compositionally biased toward basic and acidic residues: residues R187–N196 and S348–L357.

Its subcellular location is the nucleus. It is found in the nucleolus. Functionally, component of the U3 small nucleolar ribonucleoprotein. Required for the early cleavages at sites A0, A1 and A2 of the pre-ribosomal RNA. Participates in ribosome biogenesis. The sequence is that of U3 small nucleolar ribonucleoprotein protein LCP5 (LCP5) from Saccharomyces cerevisiae (strain ATCC 204508 / S288c) (Baker's yeast).